Here is a 443-residue protein sequence, read N- to C-terminus: ATP-dependent protease ATPase subunit HslU (443 aa).

Residues Ile18, 60-65 (GVGKTE), Asp256, Glu321, and Arg393 contribute to the ATP site.

The protein belongs to the ClpX chaperone family. HslU subfamily. In terms of assembly, a double ring-shaped homohexamer of HslV is capped on each side by a ring-shaped HslU homohexamer. The assembly of the HslU/HslV complex is dependent on binding of ATP.

The protein resides in the cytoplasm. ATPase subunit of a proteasome-like degradation complex; this subunit has chaperone activity. The binding of ATP and its subsequent hydrolysis by HslU are essential for unfolding of protein substrates subsequently hydrolyzed by HslV. HslU recognizes the N-terminal part of its protein substrates and unfolds these before they are guided to HslV for hydrolysis. The sequence is that of ATP-dependent protease ATPase subunit HslU from Nitrosospira multiformis (strain ATCC 25196 / NCIMB 11849 / C 71).